We begin with the raw amino-acid sequence, 288 residues long: ATP synthase gamma chain (288 aa).

This sequence belongs to the ATPase gamma chain family. F-type ATPases have 2 components, CF(1) - the catalytic core - and CF(0) - the membrane proton channel. CF(1) has five subunits: alpha(3), beta(3), gamma(1), delta(1), epsilon(1). CF(0) has three main subunits: a, b and c.

It localises to the cell inner membrane. In terms of biological role, produces ATP from ADP in the presence of a proton gradient across the membrane. The gamma chain is believed to be important in regulating ATPase activity and the flow of protons through the CF(0) complex. This chain is ATP synthase gamma chain, found in Vesicomyosocius okutanii subsp. Calyptogena okutanii (strain HA).